Consider the following 199-residue polypeptide: Probable GTP-binding protein EngB (199 aa).

An EngB-type G domain is found at 28–199; sequence DIPEIALAGR…QAWDAILEQI (172 aa). GTP contacts are provided by residues 36–43, 63–67, 81–84, 148–151, and 180–182; these read GRSNVGKS, GKTQL, DVPG, TKAD, and FSS. Residues serine 43 and threonine 65 each contribute to the Mg(2+) site.

It belongs to the TRAFAC class TrmE-Era-EngA-EngB-Septin-like GTPase superfamily. EngB GTPase family. The cofactor is Mg(2+).

Its function is as follows. Necessary for normal cell division and for the maintenance of normal septation. The protein is Probable GTP-binding protein EngB of Streptococcus uberis (strain ATCC BAA-854 / 0140J).